The chain runs to 776 residues: DNA ligase (776 aa).

Residues Asp31 to Asp35, Ser80 to Leu81, and Glu112 contribute to the NAD(+) site. Lys114 acts as the N6-AMP-lysine intermediate in catalysis. Positions 135, 172, 288, and 312 each coordinate NAD(+). Cys406, Cys409, Cys436, and Cys442 together coordinate Zn(2+). The region spanning Ala693–Val776 is the BRCT domain.

It belongs to the NAD-dependent DNA ligase family. LigA subfamily. The cofactor is Mg(2+). Mn(2+) serves as cofactor.

It carries out the reaction NAD(+) + (deoxyribonucleotide)n-3'-hydroxyl + 5'-phospho-(deoxyribonucleotide)m = (deoxyribonucleotide)n+m + AMP + beta-nicotinamide D-nucleotide.. In terms of biological role, DNA ligase that catalyzes the formation of phosphodiester linkages between 5'-phosphoryl and 3'-hydroxyl groups in double-stranded DNA using NAD as a coenzyme and as the energy source for the reaction. It is essential for DNA replication and repair of damaged DNA. The protein is DNA ligase of Pseudomonas putida (strain ATCC 700007 / DSM 6899 / JCM 31910 / BCRC 17059 / LMG 24140 / F1).